Consider the following 137-residue polypeptide: Golgin subfamily A member 7 (137 aa).

Residues Cys-69 and Cys-72 are each lipidated (S-palmitoyl cysteine).

The protein belongs to the ERF4 family. Interacts with GOLGA3. Interacts with ZDHHC9. Post-translationally, palmitoylated on Cys-69 and Cys-72; which is required for Golgi localization and interaction with GOLGA3.

Its subcellular location is the golgi apparatus membrane. Its function is as follows. May be involved in protein transport from Golgi to cell surface. The ZDHHC9-GOLGA7 complex is a palmitoyltransferase specific for HRAS and NRAS. The polypeptide is Golgin subfamily A member 7 (GOLGA7) (Bos taurus (Bovine)).